The sequence spans 1018 residues: MSHLRSVAAKLKPYCTGLLVKHNSILRTLPPRCYVYSSGAKEPFLSGTNSSYVEEMYYAWLENPKSVHKSWDAFFRSADNGTPQCEIQGVPSLADIESKLPSLSSQGLATAPAKAEKIVEEHLAVQSLIRAYQIRGHHVAQLDPLGILDADLDSFVPSDLITTLDKLGFYGLHEGDLDKVFRLPTTTYIGGTDSTLSLREIIRRLENSYCQHIGLEFMFINDVEQCQWIRQKFETPGIMKFINEEKRTLLARLIRSTRFEDFLARKWSSEKRFGLEGCEVMIPALKAIIDKSSEMGLEYVILGMPHRGRLNVLANVIRKDLDQIFCQFDPKLEASDEGSGDVKYHLGMYHERINRATNKKITLSLVANPSHLEAVDPVVQGKTKAEQFYRGDTEGNKVMSILVHGDAAFAGQGVVYETFHLSDLPSYTTNGTIHIVVNNQIGFTTDPRMARSSPYPTDVARVVNAPIFHVNADDPEAVMYVCSVAAEWRNTFNKDVVVDLVCYRRSGHNEMDEPMFTQPLMYKQIHKQVPVLKKYADKMIAEGTVTLQEFEEEIAKYDRICEEAYARSKDKKILNIKHWLDSPWPGFFTLDGEPKSMTCPPTGIPEDMLSHIGAIASSVPLKDFKIHGGLSRILKSRLEMTNSRTVDWALAEYMTFGSLLKEGIHVRLSGQDVERGTFSHRHHVLHDQEVDRWTCVPMNHLWPNQAPYTVCNSSLSEYGVLGFELGFAMASPNALVLWEAQFGDFYNTAQCIIDQFISSGQAKWVRHNGIVLLLPHGMEGMGPEHSSARPERFLQMSNDDSDAYPEFTQDFDVSQLFDCNWIVVNCSNPASYFHVLRRQILLPFRKPLIIFTPKSLLRHPEAKSSFDDMKTGTNFQRVIPENGAASHSPQEVKRVIFCTGKVYYELVKERHRKGLDSQVAITRLEQISPFPFDLVKQEAEKYATSELVWCQEEHKNMGYYDYVKARFLTILNHARPVWYVGRDPAAAPATGNKNTHHVELRRFLDIAFDLEYFEGKPF.

3 residues coordinate Ca(2+): histidine 138, aspartate 151, and aspartate 153. The thiamine diphosphate site is built by arginine 307, aspartate 406, asparagine 439, isoleucine 441, and glutamine 671. Residues aspartate 406, asparagine 439, and isoleucine 441 each coordinate Mg(2+).

This sequence belongs to the alpha-ketoglutarate dehydrogenase family. The OGDHC complex comprises multiple copies of three catalytic enzyme components, the 2-oxoglutarate dehydrogenase (OGDH/E1), the dihydrolipoamide dehydrogenase (DLST/E2) and the dihydrolipoamide dehydrogenase (DLD/E3). OGDHL/E1-like isoenzyme may replace OGDH in the OGDHC complex in the brain. It depends on thiamine diphosphate as a cofactor. Mg(2+) is required as a cofactor.

The protein resides in the mitochondrion matrix. It catalyses the reaction N(6)-[(R)-lipoyl]-L-lysyl-[protein] + 2-oxoglutarate + H(+) = N(6)-[(R)-S(8)-succinyldihydrolipoyl]-L-lysyl-[protein] + CO2. Functionally, 2-oxoglutarate dehydrogenase (E1-like) component of the 2-oxoglutarate dehydrogenase multienzyme complex (OGDHC) which mediates the decarboxylation of alpha-ketoglutarate in the tricarboxylic acid cycle. The OGDHC complex catalyzes the overall conversion of 2-oxoglutarate to succinyl-CoA and CO(2) while reducing NAD(+) to NADH. The OGDHC complex is mainly active in the mitochondrion. Involved in the inhibition of cell proliferation and in apoptosis. The polypeptide is 2-oxoglutarate dehydrogenase-like, mitochondrial (ogdhl) (Xenopus laevis (African clawed frog)).